The primary structure comprises 525 residues: Frizzled-4 (525 aa).

The first 24 residues, 1-24, serve as a signal peptide directing secretion; sequence MERRGGGGRMLALLLAGLLGGARG. Over 25 to 200 the chain is Extracellular; the sequence is FGDEEERRCD…KCGYDAGLYS (176 aa). The FZ domain maps to 28-149; the sequence is EEERRCDAIR…NDHNHMCMEG (122 aa). Cystine bridges form between Cys-33–Cys-94, Cys-41–Cys-87, Cys-78–Cys-116, Cys-105–Cys-146, Cys-109–Cys-133, Cys-169–Cys-188, Cys-192–Cys-270, and Cys-290–Cys-365. An N-linked (GlcNAc...) asparagine glycan is attached at Asn-47. N-linked (GlcNAc...) asparagine glycosylation is present at Asn-132. Residues 201-231 form a helical membrane-spanning segment; that stretch reads RSAKEFTDIWMAVWASLCFISTAFTVLTFLI. Residues 232 to 237 are Cytoplasmic-facing; the sequence is DSSRFS. The chain crosses the membrane as a helical span at residues 238–263; the sequence is YPERPIIFLSMCYNIYSIAYIVRLTV. Residues 264–287 are Extracellular-facing; the sequence is GRERISCDFEEAAEPVLIQEGLKN. Residues 288 to 321 form a helical membrane-spanning segment; that stretch reads TGCAIIFLLMYFFGMASSIWWVILTLTWFLAAGL. Residues 322 to 324 are Cytoplasmic-facing; the sequence is KWG. A helical transmembrane segment spans residues 325–353; sequence HEAIEMHSSYFHIAAWAIPAVKTIVILIM. The Extracellular segment spans residues 354–371; sequence RLVDADELTGLCYVGNQN. The helical transmembrane segment at 372-406 threads the bilayer; the sequence is LDALTGFVVAPLFTYLVIGTLFIAAGLVALFKIRS. The Cytoplasmic segment spans residues 407–419; that stretch reads NLQKDGTKTDKLE. Residues 420 to 448 form a helical membrane-spanning segment; it reads RLMVKIGVFSVLYTVPATCVIACYFYEIS. Residues 449–461 are Extracellular-facing; the sequence is NWAVFRYSADDSN. Residues 462 to 483 traverse the membrane as a helical segment; that stretch reads MAVEMLKIFMSLLVGITSGMWI. At 484-525 the chain is on the cytoplasmic side; sequence WSAKTLHTWQKCSNRLVNSGKVKREKRADGWVKPGKGNETVV. The Lys-Thr-X-X-X-Trp motif, mediates interaction with the PDZ domain of Dvl family members signature appears at 487–492; sequence KTLHTW. The PDZ-binding signature appears at 523–525; the sequence is TVV.

Belongs to the G-protein coupled receptor Fz/Smo family. Interacts (via FZ domain) with TSKU; TSKU competes with WNT2B for binding to FZD4, inhibiting Wnt signaling and repressing peripheral eye development. Expressed in the developing kidney, interdigital spaces and optic cup.

Its subcellular location is the cell membrane. In terms of biological role, receptor for Wnt proteins. Most frizzled receptors are coupled to the beta-catenin canonical signaling pathway, which leads to the activation of disheveled proteins, inhibition of GSK-3 kinase, nuclear accumulation of beta-catenin and activation of Wnt target genes. A second signaling pathway involving PKC and calcium fluxes has been seen for some family members, but it is not yet clear if it represents a distinct pathway or if it can be integrated in the canonical pathway, as PKC seems to be required for Wnt-mediated inactivation of GSK-3 kinase. Both pathways seem to involve interactions with G-proteins. May be involved in transduction and intercellular transmission of polarity information during tissue morphogenesis and/or in differentiated tissues. The polypeptide is Frizzled-4 (FZD4) (Gallus gallus (Chicken)).